Reading from the N-terminus, the 280-residue chain is 3-methyl-2-oxobutanoate hydroxymethyltransferase (280 aa).

Mg(2+) contacts are provided by Asp49 and Asp88. Residues 49–50 (DS), Asp88, and Lys118 each bind 3-methyl-2-oxobutanoate. Glu120 contacts Mg(2+). Glu187 functions as the Proton acceptor in the catalytic mechanism.

This sequence belongs to the PanB family. Homodecamer; pentamer of dimers. Mg(2+) is required as a cofactor.

The protein resides in the cytoplasm. It catalyses the reaction 3-methyl-2-oxobutanoate + (6R)-5,10-methylene-5,6,7,8-tetrahydrofolate + H2O = 2-dehydropantoate + (6S)-5,6,7,8-tetrahydrofolate. The protein operates within cofactor biosynthesis; (R)-pantothenate biosynthesis; (R)-pantoate from 3-methyl-2-oxobutanoate: step 1/2. Functionally, catalyzes the reversible reaction in which hydroxymethyl group from 5,10-methylenetetrahydrofolate is transferred onto alpha-ketoisovalerate to form ketopantoate. This is 3-methyl-2-oxobutanoate hydroxymethyltransferase from Xanthobacter autotrophicus (strain ATCC BAA-1158 / Py2).